Here is a 195-residue protein sequence, read N- to C-terminus: Large ribosomal subunit protein bL25 (195 aa).

Belongs to the bacterial ribosomal protein bL25 family. CTC subfamily. In terms of assembly, part of the 50S ribosomal subunit; part of the 5S rRNA/L5/L18/L25 subcomplex. Contacts the 5S rRNA. Binds to the 5S rRNA independently of L5 and L18.

This is one of the proteins that binds to the 5S RNA in the ribosome where it forms part of the central protuberance. The sequence is that of Large ribosomal subunit protein bL25 from Chlorobium chlorochromatii (strain CaD3).